The following is a 116-amino-acid chain: Protein SPIRAL1-like 1 (116 aa).

Residues 1–12 (MSRGGSAGGGQS) are compositionally biased toward gly residues. A disordered region spans residues 1–116 (MSRGGSAGGG…SSLGYLFGGN (116 aa)). The span at 27–43 (AAKPAPAAAPAPAPAPA) shows a compositional bias: pro residues. Low complexity predominate over residues 44–60 (PAAAVAAPAEKPSPAKA). Over residues 72–90 (GSRSNNNYHRADGQNTGNF) the composition is skewed to polar residues. Residues 103 to 116 (PGGGSSLGYLFGGN) are compositionally biased toward gly residues.

The protein belongs to the SPIRAL1 family.

Acts in maintaining the cortical microtubules organization essential for anisotropic cell growth. The sequence is that of Protein SPIRAL1-like 1 from Oryza sativa subsp. japonica (Rice).